Here is a 340-residue protein sequence, read N- to C-terminus: Ketol-acid reductoisomerase (NADP(+)) (340 aa).

The KARI N-terminal Rossmann domain occupies 1-182 (MRVYYDRDCD…GGGRSGIIET (182 aa)). NADP(+)-binding positions include 24-27 (YGSQ), Arg48, Ser51, Ser53, and 83-86 (DELQ). His108 is an active-site residue. Gly134 is a binding site for NADP(+). Residues 183-329 (NFREECETDL…ETLRGMMPWI (147 aa)) enclose the KARI C-terminal knotted domain. Residues Asp191, Glu195, Glu227, and Glu231 each contribute to the Mg(2+) site. Residue Ser252 participates in substrate binding.

Belongs to the ketol-acid reductoisomerase family. Mg(2+) serves as cofactor.

The catalysed reaction is (2R)-2,3-dihydroxy-3-methylbutanoate + NADP(+) = (2S)-2-acetolactate + NADPH + H(+). It carries out the reaction (2R,3R)-2,3-dihydroxy-3-methylpentanoate + NADP(+) = (S)-2-ethyl-2-hydroxy-3-oxobutanoate + NADPH + H(+). The protein operates within amino-acid biosynthesis; L-isoleucine biosynthesis; L-isoleucine from 2-oxobutanoate: step 2/4. It participates in amino-acid biosynthesis; L-valine biosynthesis; L-valine from pyruvate: step 2/4. Involved in the biosynthesis of branched-chain amino acids (BCAA). Catalyzes an alkyl-migration followed by a ketol-acid reduction of (S)-2-acetolactate (S2AL) to yield (R)-2,3-dihydroxy-isovalerate. In the isomerase reaction, S2AL is rearranged via a Mg-dependent methyl migration to produce 3-hydroxy-3-methyl-2-ketobutyrate (HMKB). In the reductase reaction, this 2-ketoacid undergoes a metal-dependent reduction by NADPH to yield (R)-2,3-dihydroxy-isovalerate. This is Ketol-acid reductoisomerase (NADP(+)) from Jannaschia sp. (strain CCS1).